We begin with the raw amino-acid sequence, 158 residues long: MKHRVVGRRLDRTTEHRTAMFKNMVTSLLRHERIVTTTPKAKELKRFADKVITQAKRGTPHARRLAHRDVRDVEVLNKLFDTLAERFKARPGGYTRIVRVGRRAGDNAEMSVIELVDRAPAAAPEAEEKGEKKAAKAPKAEKAPKAEKKPAKKAAKAE.

The segment at 119 to 158 is disordered; sequence APAAAPEAEEKGEKKAAKAPKAEKAPKAEKKPAKKAAKAE. Basic and acidic residues predominate over residues 126-158; that stretch reads AEEKGEKKAAKAPKAEKAPKAEKKPAKKAAKAE.

The protein belongs to the bacterial ribosomal protein bL17 family. As to quaternary structure, part of the 50S ribosomal subunit. Contacts protein L32.

The polypeptide is Large ribosomal subunit protein bL17 (Anaeromyxobacter sp. (strain K)).